The chain runs to 281 residues: Diaminopimelate epimerase (281 aa).

Positions 13 and 66 each coordinate substrate. Residue Cys75 is the Proton donor of the active site. Residues 76 to 77, Asn164, Asn197, and 215 to 216 each bind substrate; these read GN and ER. Cys224 (proton acceptor) is an active-site residue. 225–226 serves as a coordination point for substrate; the sequence is GT.

This sequence belongs to the diaminopimelate epimerase family. As to quaternary structure, homodimer.

Its subcellular location is the cytoplasm. It carries out the reaction (2S,6S)-2,6-diaminopimelate = meso-2,6-diaminopimelate. The protein operates within amino-acid biosynthesis; L-lysine biosynthesis via DAP pathway; DL-2,6-diaminopimelate from LL-2,6-diaminopimelate: step 1/1. Catalyzes the stereoinversion of LL-2,6-diaminopimelate (L,L-DAP) to meso-diaminopimelate (meso-DAP), a precursor of L-lysine and an essential component of the bacterial peptidoglycan. This is Diaminopimelate epimerase from Microcystis aeruginosa (strain NIES-843 / IAM M-2473).